We begin with the raw amino-acid sequence, 522 residues long: Maturase K (522 aa).

This sequence belongs to the intron maturase 2 family. MatK subfamily.

It is found in the plastid. The protein resides in the chloroplast. Its function is as follows. Usually encoded in the trnK tRNA gene intron. Probably assists in splicing its own and other chloroplast group II introns. This is Maturase K from Micranthus junceus (Micranthus plantagineus var. junceus).